A 311-amino-acid polypeptide reads, in one-letter code: Ribosomal RNA small subunit methyltransferase H (311 aa).

S-adenosyl-L-methionine-binding positions include 35–37 (GGH), D55, F80, D102, and Q109.

Belongs to the methyltransferase superfamily. RsmH family.

It is found in the cytoplasm. The catalysed reaction is cytidine(1402) in 16S rRNA + S-adenosyl-L-methionine = N(4)-methylcytidine(1402) in 16S rRNA + S-adenosyl-L-homocysteine + H(+). Specifically methylates the N4 position of cytidine in position 1402 (C1402) of 16S rRNA. In Pseudoalteromonas atlantica (strain T6c / ATCC BAA-1087), this protein is Ribosomal RNA small subunit methyltransferase H.